Consider the following 635-residue polypeptide: DNA mismatch repair protein MutL (635 aa).

Residues Gly359–Tyr399 are disordered. The span at Ala364 to Ala377 shows a compositional bias: low complexity. The span at Val378–Tyr399 shows a compositional bias: basic and acidic residues.

Belongs to the DNA mismatch repair MutL/HexB family.

In terms of biological role, this protein is involved in the repair of mismatches in DNA. It is required for dam-dependent methyl-directed DNA mismatch repair. May act as a 'molecular matchmaker', a protein that promotes the formation of a stable complex between two or more DNA-binding proteins in an ATP-dependent manner without itself being part of a final effector complex. This Yersinia pseudotuberculosis serotype O:1b (strain IP 31758) protein is DNA mismatch repair protein MutL.